The chain runs to 333 residues: Glycerol-3-phosphate dehydrogenase [NAD(P)+] (333 aa).

NADPH contacts are provided by Trp-13, Lys-33, and Lys-108. Residues Lys-108 and Gly-138 each contribute to the sn-glycerol 3-phosphate site. Ser-142 contacts NADPH. Sn-glycerol 3-phosphate is bound by residues Lys-193, Asp-246, Ser-256, Arg-257, and Asn-258. Lys-193 acts as the Proton acceptor in catalysis. Arg-257 contributes to the NADPH binding site. The NADPH site is built by Val-281 and Glu-283.

This sequence belongs to the NAD-dependent glycerol-3-phosphate dehydrogenase family.

Its subcellular location is the cytoplasm. The enzyme catalyses sn-glycerol 3-phosphate + NAD(+) = dihydroxyacetone phosphate + NADH + H(+). It catalyses the reaction sn-glycerol 3-phosphate + NADP(+) = dihydroxyacetone phosphate + NADPH + H(+). It participates in membrane lipid metabolism; glycerophospholipid metabolism. In terms of biological role, catalyzes the reduction of the glycolytic intermediate dihydroxyacetone phosphate (DHAP) to sn-glycerol 3-phosphate (G3P), the key precursor for phospholipid synthesis. The sequence is that of Glycerol-3-phosphate dehydrogenase [NAD(P)+] from Bifidobacterium longum (strain DJO10A).